The primary structure comprises 986 residues: Bone morphogenetic protein 1 (986 aa).

The N-terminal stretch at methionine 1–proline 22 is a signal peptide. Positions leucine 23–arginine 120 are excised as a propeptide. A disordered region spans residues serine 83–arginine 125. A compositionally biased stretch (polar residues) spans glycine 90–proline 104. Asparagine 91 carries an N-linked (GlcNAc...) asparagine glycan. Over residues tryptophan 112–alanine 122 the composition is skewed to basic residues. In terms of domain architecture, Peptidase M12A spans alanine 121–proline 320. Asparagine 142 is a glycosylation site (N-linked (GlcNAc...) asparagine). Disulfide bonds link cysteine 163-cysteine 319, cysteine 183-cysteine 205, cysteine 185-cysteine 186, and cysteine 322-cysteine 348. Histidine 213 lines the Zn(2+) pocket. The active site involves glutamate 214. 2 residues coordinate Zn(2+): histidine 217 and histidine 223. 2 CUB domains span residues cysteine 322 to isoleucine 434 and cysteine 435 to lysine 546. Asparagine 332 and asparagine 363 each carry an N-linked (GlcNAc...) asparagine glycan. 15 cysteine pairs are disulfide-bonded: cysteine 375/cysteine 397, cysteine 435/cysteine 461, cysteine 488/cysteine 510, cysteine 551/cysteine 563, cysteine 559/cysteine 572, cysteine 574/cysteine 587, cysteine 591/cysteine 617, cysteine 644/cysteine 666, cysteine 707/cysteine 718, cysteine 714/cysteine 727, cysteine 729/cysteine 742, cysteine 747/cysteine 773, cysteine 800/cysteine 822, cysteine 860/cysteine 890, and cysteine 917/cysteine 939. The 42-residue stretch at glutamate 547–glutamate 588 folds into the EGF-like 1; calcium-binding domain. Residues cysteine 591 to aspartate 703 enclose the CUB 3 domain. N-linked (GlcNAc...) asparagine glycosylation is present at asparagine 599. The EGF-like 2; calcium-binding domain maps to lysine 704–lysine 743. CUB domains follow at residues cysteine 747 to glutamate 859 and cysteine 860 to threonine 976. An omega-N-methylarginine mark is found at arginine 934 and arginine 937.

In terms of assembly, interacts with POSTN, the interaction promotes deposition on the extracellular matrix. Zn(2+) serves as cofactor. Post-translationally, proteolytically activated in the trans-Golgi network by furin-like/paired basic proprotein convertases, cleavage is not required for secretion. In terms of tissue distribution, ubiquitous.

It is found in the golgi apparatus. The protein localises to the trans-Golgi network. It localises to the secreted. The protein resides in the extracellular space. Its subcellular location is the extracellular matrix. The enzyme catalyses Cleavage of the C-terminal propeptide at Ala-|-Asp in type I and II procollagens and at Arg-|-Asp in type III.. With respect to regulation, activity is increased by the procollagen C-endopeptidase enhancer protein. In terms of biological role, metalloprotease that plays key roles in regulating the formation of the extracellular matrix (ECM) via processing of various precursor proteins into mature functional enzymes or structural proteins. Thereby participates in several developmental and physiological processes such as cartilage and bone formation, muscle growth and homeostasis, wound healing and tissue repair. Roles in ECM formation include cleavage of the C-terminal propeptides from procollagens such as procollagen I, II and III or the proteolytic activation of the enzyme lysyl oxidase LOX, necessary to formation of covalent cross-links in collagen and elastic fibers. Additional substrates include matricellular thrombospondin-1/THBS1 whose cleavage leads to cell adhesion disruption and TGF-beta activation. Functionally, plays an important role in bone repair by acting as a coactivator of BMP7. This chain is Bone morphogenetic protein 1 (BMP1), found in Homo sapiens (Human).